Here is an 874-residue protein sequence, read N- to C-terminus: Alanine--tRNA ligase (874 aa).

The Zn(2+) site is built by H562, H566, C664, and H668.

The protein belongs to the class-II aminoacyl-tRNA synthetase family. Zn(2+) is required as a cofactor.

It localises to the cytoplasm. It carries out the reaction tRNA(Ala) + L-alanine + ATP = L-alanyl-tRNA(Ala) + AMP + diphosphate. Its function is as follows. Catalyzes the attachment of alanine to tRNA(Ala) in a two-step reaction: alanine is first activated by ATP to form Ala-AMP and then transferred to the acceptor end of tRNA(Ala). Also edits incorrectly charged Ser-tRNA(Ala) and Gly-tRNA(Ala) via its editing domain. The chain is Alanine--tRNA ligase from Shewanella sp. (strain MR-7).